The sequence spans 684 residues: Threonine--tRNA ligase (684 aa).

Residues 1 to 66 (MTAVASSAPA…DTDVEVTPVA (66 aa)) form the TGS domain. Residues 261 to 567 (DHRKLGVELD…LTEHYAGAFP (307 aa)) form a catalytic region. Zn(2+) contacts are provided by Cys366, His417, and His544.

It belongs to the class-II aminoacyl-tRNA synthetase family. In terms of assembly, homodimer. Zn(2+) serves as cofactor.

It localises to the cytoplasm. It carries out the reaction tRNA(Thr) + L-threonine + ATP = L-threonyl-tRNA(Thr) + AMP + diphosphate + H(+). Its function is as follows. Catalyzes the attachment of threonine to tRNA(Thr) in a two-step reaction: L-threonine is first activated by ATP to form Thr-AMP and then transferred to the acceptor end of tRNA(Thr). Also edits incorrectly charged L-seryl-tRNA(Thr). The sequence is that of Threonine--tRNA ligase from Mycolicibacterium smegmatis (strain ATCC 700084 / mc(2)155) (Mycobacterium smegmatis).